A 542-amino-acid chain; its full sequence is Chondroitin sulfate N-acetylgalactosaminyltransferase 2 (542 aa).

Topologically, residues 1-13 are cytoplasmic; that stretch reads MSRRGSILHSRTQ. Residues 14 to 34 form a helical; Signal-anchor for type II membrane protein membrane-spanning segment; sequence WLLLGLALLFSLVLFMYLLEC. Residues 35 to 542 are Lumenal-facing; the sequence is APQTDGNASL…AYRTNSETAG (508 aa). An N-linked (GlcNAc...) asparagine glycan is attached at Asn-41. A coiled-coil region spans residues 59-105; sequence ALLQEQEEHYQTRATSLKRQIAQLKQELQDMSEKMRALQERKKLGAN. An N-linked (GlcNAc...) asparagine glycan is attached at Asn-333. Residues Asp-369 and His-486 each coordinate a divalent metal cation.

It belongs to the chondroitin N-acetylgalactosaminyltransferase family.

It is found in the golgi apparatus. It localises to the golgi stack membrane. The catalysed reaction is 3-O-(beta-D-GlcA-(1-&gt;3)-beta-D-Gal-(1-&gt;3)-beta-D-Gal-(1-&gt;4)-beta-D-Xyl)-L-seryl-[protein] + UDP-N-acetyl-alpha-D-galactosamine = 3-O-(beta-D-GalNAc-(1-&gt;4)-beta-D-GlcA-(1-&gt;3)-beta-D-Gal-(1-&gt;3)-beta-D-Gal-(1-&gt;4)-beta-D-Xyl)-L-seryl-[protein] + UDP + H(+). Its function is as follows. Transfers 1,4-N-acetylgalactosamine (GalNAc) from UDP-GalNAc to the non-reducing end of glucuronic acid (GlcUA). Required for addition of the first GalNAc to the core tetrasaccharide linker and for elongation of chondroitin chains. This Mus musculus (Mouse) protein is Chondroitin sulfate N-acetylgalactosaminyltransferase 2 (Csgalnact2).